Here is an 872-residue protein sequence, read N- to C-terminus: Homeobox-leucine zipper protein ROC6 (872 aa).

2 disordered regions span residues 28–53 and 67–130; these read VHNS…GLSL and NRSL…HRHT. Gly residues predominate over residues 74-85; sequence GNGGSGSGGDGD. The segment covering 86–99 has biased composition (basic and acidic residues); the sequence is SLGRGREEENDSRS. A compositionally biased stretch (basic residues) spans 119 to 130; sequence PRKKKKRYHRHT. The segment at residues 122 to 181 is a DNA-binding region (homeobox); that stretch reads KKKRYHRHTPQQIQELEAVFKECPHPDEKQRMELSRRLNLESRQVKFWFQNRRTQMKQTQ. A coiled-coil region spans residues 176-248; sequence QMKQTQIERH…LKDELDRVCA (73 aa). The 244-residue stretch at 340–583 folds into the START domain; sequence GAIDRAVLLE…LQRQCQYLAI (244 aa). A disordered region spans residues 792–818; that stretch reads HNNGASPSPAEVGSGASPNSAAGGGGG.

This sequence belongs to the HD-ZIP homeobox family. Class IV subfamily.

Its subcellular location is the nucleus. Probable transcription factor. The sequence is that of Homeobox-leucine zipper protein ROC6 (ROC6) from Oryza sativa subsp. japonica (Rice).